The primary structure comprises 1356 residues: DNA-directed RNA polymerase subunit beta (1356 aa).

It belongs to the RNA polymerase beta chain family. The RNAP catalytic core consists of 2 alpha, 1 beta, 1 beta' and 1 omega subunit. When a sigma factor is associated with the core the holoenzyme is formed, which can initiate transcription.

It catalyses the reaction RNA(n) + a ribonucleoside 5'-triphosphate = RNA(n+1) + diphosphate. Its function is as follows. DNA-dependent RNA polymerase catalyzes the transcription of DNA into RNA using the four ribonucleoside triphosphates as substrates. This is DNA-directed RNA polymerase subunit beta from Phenylobacterium zucineum (strain HLK1).